A 75-amino-acid chain; its full sequence is UPF0346 protein OB1736 (75 aa).

This sequence belongs to the UPF0346 family.

The sequence is that of UPF0346 protein OB1736 from Oceanobacillus iheyensis (strain DSM 14371 / CIP 107618 / JCM 11309 / KCTC 3954 / HTE831).